Consider the following 249-residue polypeptide: Triosephosphate isomerase (249 aa).

A substrate-binding site is contributed by 9–11 (NWK). Catalysis depends on His94, which acts as the Electrophile. Catalysis depends on Glu166, which acts as the Proton acceptor. Substrate is bound by residues Gly172, Ser211, and 232–233 (GG).

This sequence belongs to the triosephosphate isomerase family. As to quaternary structure, homodimer.

It localises to the cytoplasm. It catalyses the reaction D-glyceraldehyde 3-phosphate = dihydroxyacetone phosphate. It functions in the pathway carbohydrate biosynthesis; gluconeogenesis. It participates in carbohydrate degradation; glycolysis; D-glyceraldehyde 3-phosphate from glycerone phosphate: step 1/1. Its function is as follows. Involved in the gluconeogenesis. Catalyzes stereospecifically the conversion of dihydroxyacetone phosphate (DHAP) to D-glyceraldehyde-3-phosphate (G3P). The protein is Triosephosphate isomerase of Dechloromonas aromatica (strain RCB).